Reading from the N-terminus, the 627-residue chain is Coiled-coil domain-containing protein 22 (627 aa).

Residues 1 to 321 (MEEADRILIH…VSDVPATSRR (321 aa)) form a sufficient for interaction with COMMD1 region. The sufficicient and required for interaction with CCDC93 stretch occupies residues 1–447 (MEEADRILIH…LQDCRELESS (447 aa)). The segment at 218–243 (TGRDRPGDEDWVHRTSRLPPQEDTRA) is disordered. Positions 219–230 (GRDRPGDEDWVH) are enriched in basic and acidic residues. Residues 320–627 (RRPEQVTWAA…AGLLGRVREA (308 aa)) are a coiled coil. Serine 410 is subject to Phosphoserine.

This sequence belongs to the CCDC22 family. Component of the commander complex consisting of the CCC subcomplex and the retriever subcomplex. Component of the CCC (COMMD/CCDC22/CCDC93) subcomplex consisting of COMMD1, COMMD2, COMMD3, COMMD4, COMMD5, COMMD6, COMMD7, COMMD8, COMMD9, COMMD10, CCDC22 and CCDC93. Forms a coiled-coil heterodimer with CCDC22; this heterodimer interacts with the guanine nucleotide exchange factor DENND10; the interaction is direct. Interacts with CUL1, CUL2, CUL3, SKP1, BTRC. Interacts with SNX17 and SNX31. Interacts with CPNE1 and CPNE4. As to expression, widely expressed in adult tissues and in fetal liver and brain, with highest levels in prostate and lowest in skeletal muscle.

It localises to the endosome. The protein resides in the cytoplasm. The protein localises to the cytoskeleton. Its subcellular location is the microtubule organizing center. It is found in the centrosome. Functionally, component of the commander complex that is essential for endosomal recycling of transmembrane cargos; the Commander complex is composed of composed of the CCC subcomplex and the retriever subcomplex. Component of the CCC complex, which is involved in the regulation of endosomal recycling of surface proteins, including integrins, signaling receptor and channels. Involved in regulation of NF-kappa-B signaling. Promotes ubiquitination of I-kappa-B-kinase subunit IKBKB and its subsequent proteasomal degradation leading to NF-kappa-B activation; the function may involve association with COMMD8 and a CUL1-dependent E3 ubiquitin ligase complex. May down-regulate NF-kappa-B activity via association with COMMD1 and involving a CUL2-dependent E3 ubiquitin ligase complex. Regulates the cellular localization of COMM domain-containing proteins, such as COMMD1 and COMMD10. Component of the CCC complex, which is involved in the regulation of endosomal recycling of surface proteins, including integrins, signaling receptor and channels. The CCC complex associates with SNX17, retriever and WASH complexes to prevent lysosomal degradation and promote cell surface recycling of numerous cargos such as integrins ITGA5:ITGB1. Plays a role in copper ion homeostasis. Involved in copper-dependent ATP7A trafficking between the trans-Golgi network and vesicles in the cell periphery; the function is proposed to depend on its association within the CCC complex and cooperation with the WASH complex on early endosomes. (Microbial infection) The CCC complex, in collaboration with the heterotrimeric retriever complex, mediates the exit of human papillomavirus to the cell surface. The protein is Coiled-coil domain-containing protein 22 (CCDC22) of Homo sapiens (Human).